The chain runs to 879 residues: Putative ankyrin repeat protein L88 (879 aa).

17 ANK repeats span residues 22–62 (KGFT…QKNK), 63–96 (KGYTALSIAVRNCGNWCSYKTVRILLEKGAKTNI), 100–133 (EGITPLIFASFNSRFCEGFNVINLLLKYGADINA), 137–170 (NGYTALMNASSNSNSSSTYTTVKLLLDNDANIDD), 174–207 (NGLTCLMHACNNVTLKSSIGTIELLLYYGADINA), 211–241 (NGRTALMHACDNSNNIELIELLLNRGADIEA), 245–278 (KGLTCLMIASKYAGSINSVEVVEILINRGANIEA), 282–313 (KLRTPLMYACKYSHNNTSVIKLLLDKGANIET), 317–347 (RNNTALILASTYSSSVEPIKLLLDKGANINH), 351–384 (EGCNALNLACINSSYNNNSEIVKLLIDRGSNINN), 387–420 (SERTILTSTCEFIGKGSNIDTVKILLDNNADPNI), 424–463 (NGNTTLLYMCKKYIKDGPKKRDLNFNVIKLLLDYKANPNF), 470–499 (NSLTRLSKYSDKVDIEIIKLLLDYGVDINS), 506–542 (SALLLFCMDLQNSCTKISYNCKNIVKLLLEKGADVNI), 546–578 (NGNTALSIICESDDNNLSDIIELLLAHNANPNT), 674–704 (SGITALLHECQVSDNIEPIKLLLDNGADPNI), and 708–738 (KGETALHKAVRHTNKIDVIKLLMDYHANPYI).

This Acanthamoeba polyphaga mimivirus (APMV) protein is Putative ankyrin repeat protein L88.